The chain runs to 695 residues: F-box only protein 34 (695 aa).

3 disordered regions span residues 239-275, 316-373, and 472-524; these read GQSR…QGEP, LTNG…CPSL, and GQDQ…PGGS. In terms of domain architecture, F-box spans 556 to 608; it reads QQYMACLPHHIIVKIFRLLPTLSLAILKCTCRYFKSIIEYYNIRPADSRWVRD.

Directly interacts with SKP1 and CUL1.

In terms of biological role, substrate-recognition component of the SCF (SKP1-CUL1-F-box protein)-type E3 ubiquitin ligase complex. The polypeptide is F-box only protein 34 (Fbxo34) (Mus musculus (Mouse)).